Here is a 374-residue protein sequence, read N- to C-terminus: Severin (374 aa).

3 Gelsolin-like repeats span residues 58 to 109 (FTLE…DEYG), 180 to 220 (EGKT…KCSA), and 278 to 369 (EVIK…SFLK).

The protein belongs to the villin/gelsolin family.

Its function is as follows. Severin blocks the ends of F-actin and causes the fragmentation and depolymerization of actin filaments. This severin binds stably with actin both in a Ca(2+) dependent and a Ca(2+) independent manner. The chain is Severin (AG8) from Echinococcus granulosus (Hydatid tapeworm).